A 275-amino-acid chain; its full sequence is Elongation factor Ts (275 aa).

The interval 76 to 79 (TDFV) is involved in Mg(2+) ion dislocation from EF-Tu.

This sequence belongs to the EF-Ts family.

The protein localises to the cytoplasm. Associates with the EF-Tu.GDP complex and induces the exchange of GDP to GTP. It remains bound to the aminoacyl-tRNA.EF-Tu.GTP complex up to the GTP hydrolysis stage on the ribosome. The protein is Elongation factor Ts of Nocardia farcinica (strain IFM 10152).